The chain runs to 157 residues: Frd operon probable iron-sulfur subunit A (157 aa).

3 4Fe-4S ferredoxin-type domains span residues 24-55 (KGFS…IHNK), 56-85 (DYYY…VVSR), and 100-133 (FKAE…CIDR). Residues C34, C37, C42, C46, C65, C68, C71, C75, C107, C110, C119, and C123 each contribute to the [4Fe-4S] cluster site.

The sequence is that of Frd operon probable iron-sulfur subunit A from Proteus vulgaris.